We begin with the raw amino-acid sequence, 141 residues long: Large ribosomal subunit protein uL16 (141 aa).

Residues 1 to 21 are disordered; it reads MLMPKRVKYRKQQRGHNRGMA.

This sequence belongs to the universal ribosomal protein uL16 family. In terms of assembly, part of the 50S ribosomal subunit.

Binds 23S rRNA and is also seen to make contacts with the A and possibly P site tRNAs. The chain is Large ribosomal subunit protein uL16 from Roseiflexus castenholzii (strain DSM 13941 / HLO8).